Reading from the N-terminus, the 299-residue chain is CCR4-NOT transcription complex subunit 9 (299 aa).

Residue Met-1 is modified to N-acetylmethionine.

Belongs to the CNOT9 family. As to quaternary structure, homodimer. Component of the CCR4-NOT complex; distinct complexes seem to exist that differ in the participation of probably mutually exclusive catalytic subunits. Interacts with MYB, ATF2, RARA, RARB, RARG, RXRA, RXRB and RXRG. Identified in a complex with ATF2 bound to target DNA. Interacts with NANOS2. Directly interacts with ZNF335.

It localises to the nucleus. It is found in the cytoplasm. The protein localises to the P-body. Functionally, component of the CCR4-NOT complex which is one of the major cellular mRNA deadenylases and is linked to various cellular processes including bulk mRNA degradation, miRNA-mediated repression, translational repression during translational initiation and general transcription regulation. Additional complex functions may be a consequence of its influence on mRNA expression. Involved in down-regulation of MYB- and JUN-dependent transcription. Enhances ligand-dependent transcriptional activity of nuclear hormone receptors. May play a role in cell differentiation. In Bos taurus (Bovine), this protein is CCR4-NOT transcription complex subunit 9.